Consider the following 218-residue polypeptide: Histidine biosynthesis bifunctional protein HisIE (218 aa).

Residues 1-131 (MAPHQFKSKG…GDYDLPPADT (131 aa)) are phosphoribosyl-AMP cyclohydrolase. A phosphoribosyl-ATP pyrophosphohydrolase region spans residues 132-218 (LSQVFRVVEE…VYRALQQRRR (87 aa)).

It in the N-terminal section; belongs to the PRA-CH family. In the C-terminal section; belongs to the PRA-PH family.

The protein localises to the cytoplasm. The catalysed reaction is 1-(5-phospho-beta-D-ribosyl)-ATP + H2O = 1-(5-phospho-beta-D-ribosyl)-5'-AMP + diphosphate + H(+). It catalyses the reaction 1-(5-phospho-beta-D-ribosyl)-5'-AMP + H2O = 1-(5-phospho-beta-D-ribosyl)-5-[(5-phospho-beta-D-ribosylamino)methylideneamino]imidazole-4-carboxamide. Its pathway is amino-acid biosynthesis; L-histidine biosynthesis; L-histidine from 5-phospho-alpha-D-ribose 1-diphosphate: step 2/9. It participates in amino-acid biosynthesis; L-histidine biosynthesis; L-histidine from 5-phospho-alpha-D-ribose 1-diphosphate: step 3/9. This chain is Histidine biosynthesis bifunctional protein HisIE, found in Gloeobacter violaceus (strain ATCC 29082 / PCC 7421).